We begin with the raw amino-acid sequence, 222 residues long: UPF0128 protein PF1488 (222 aa).

The protein belongs to the UPF0128 family.

The sequence is that of UPF0128 protein PF1488 from Pyrococcus furiosus (strain ATCC 43587 / DSM 3638 / JCM 8422 / Vc1).